An 800-amino-acid polypeptide reads, in one-letter code: DNA topoisomerase 4 subunit A (800 aa).

One can recognise a Topo IIA-type catalytic domain in the interval 31–496 (LPDVRDGLKP…ISEIKIDKEV (466 aa)). Tyrosine 119 functions as the O-(5'-phospho-DNA)-tyrosine intermediate in the catalytic mechanism.

This sequence belongs to the type II topoisomerase GyrA/ParC subunit family. ParC type 2 subfamily. Heterotetramer composed of ParC and ParE.

The protein localises to the cell membrane. It catalyses the reaction ATP-dependent breakage, passage and rejoining of double-stranded DNA.. Its function is as follows. Topoisomerase IV is essential for chromosome segregation. It relaxes supercoiled DNA. Performs the decatenation events required during the replication of a circular DNA molecule. In Staphylococcus epidermidis (strain ATCC 12228 / FDA PCI 1200), this protein is DNA topoisomerase 4 subunit A.